We begin with the raw amino-acid sequence, 259 residues long: 5'-nucleotidase SurE (259 aa).

Residues D15, D16, S46, and N102 each contribute to the a divalent metal cation site.

It belongs to the SurE nucleotidase family. Requires a divalent metal cation as cofactor.

The protein localises to the cytoplasm. The enzyme catalyses a ribonucleoside 5'-phosphate + H2O = a ribonucleoside + phosphate. In terms of biological role, nucleotidase that shows phosphatase activity on nucleoside 5'-monophosphates. The sequence is that of 5'-nucleotidase SurE from Chlorobium luteolum (strain DSM 273 / BCRC 81028 / 2530) (Pelodictyon luteolum).